We begin with the raw amino-acid sequence, 900 residues long: Alanine--tRNA ligase (900 aa).

His587, His591, Cys691, and His695 together coordinate Zn(2+).

Belongs to the class-II aminoacyl-tRNA synthetase family. It depends on Zn(2+) as a cofactor.

It is found in the cytoplasm. The catalysed reaction is tRNA(Ala) + L-alanine + ATP = L-alanyl-tRNA(Ala) + AMP + diphosphate. Functionally, catalyzes the attachment of alanine to tRNA(Ala) in a two-step reaction: alanine is first activated by ATP to form Ala-AMP and then transferred to the acceptor end of tRNA(Ala). Also edits incorrectly charged Ser-tRNA(Ala) and Gly-tRNA(Ala) via its editing domain. This chain is Alanine--tRNA ligase, found in Aeropyrum pernix (strain ATCC 700893 / DSM 11879 / JCM 9820 / NBRC 100138 / K1).